Reading from the N-terminus, the 237-residue chain is DNA polymerase III subunit epsilon (237 aa).

2 residues coordinate a divalent metal cation: Asp10 and Glu12. Residues Asp10, Glu12, and His64 each contribute to the substrate site. The active-site Proton acceptor is His159. Position 164 (Asp164) interacts with a divalent metal cation. Substrate is bound at residue Asp164.

The DNA polymerase holoenzyme is a complex that contains 10 different types of subunits. These subunits are organized into 3 functionally essential subassemblies: the pol III core, the beta sliding clamp processivity factor and the clamp-loading complex. The pol III core (subunits alpha,epsilon and theta) contains the polymerase and the 3'-5' exonuclease proofreading activities. The polymerase is tethered to the template via the sliding clamp processivity factor. The clamp-loading complex assembles the beta processivity factor onto the primer template and plays a central role in the organization and communication at the replication fork. This complex contains delta, delta', psi and chi, and copies of either or both of two different DnaX proteins, gamma and tau. The composition of the holoenzyme is, therefore: (alpha,epsilon,theta)[2]-(gamma/tau)[3]-delta,delta', psi,chi-beta[4]. Requires Mg(2+) as cofactor. The cofactor is Mn(2+).

The catalysed reaction is DNA(n) + a 2'-deoxyribonucleoside 5'-triphosphate = DNA(n+1) + diphosphate. In terms of biological role, DNA polymerase III is a complex, multichain enzyme responsible for most of the replicative synthesis in bacteria. The epsilon subunit contain the editing function and is a proofreading 3'-5' exonuclease. The sequence is that of DNA polymerase III subunit epsilon (dnaQ) from Buchnera aphidicola subsp. Acyrthosiphon pisum (strain APS) (Acyrthosiphon pisum symbiotic bacterium).